A 55-amino-acid polypeptide reads, in one-letter code: Large ribosomal subunit protein bL33 (55 aa).

Belongs to the bacterial ribosomal protein bL33 family.

In Dehalococcoides mccartyi (strain ATCC BAA-2266 / KCTC 15142 / 195) (Dehalococcoides ethenogenes (strain 195)), this protein is Large ribosomal subunit protein bL33.